The following is a 351-amino-acid chain: Dual-specificity RNA methyltransferase RlmN (351 aa).

E90 serves as the catalytic Proton acceptor. The region spanning 96 to 330 (EKDHYTACLS…ATLRKSKGSD (235 aa)) is the Radical SAM core domain. Residues C103 and C335 are joined by a disulfide bond. 3 residues coordinate [4Fe-4S] cluster: C110, C114, and C117. Residues 162-163 (GE), S194, 216-218 (SLH), and N292 contribute to the S-adenosyl-L-methionine site. Catalysis depends on C335, which acts as the S-methylcysteine intermediate.

This sequence belongs to the radical SAM superfamily. RlmN family. [4Fe-4S] cluster serves as cofactor.

It localises to the cytoplasm. The catalysed reaction is adenosine(2503) in 23S rRNA + 2 reduced [2Fe-2S]-[ferredoxin] + 2 S-adenosyl-L-methionine = 2-methyladenosine(2503) in 23S rRNA + 5'-deoxyadenosine + L-methionine + 2 oxidized [2Fe-2S]-[ferredoxin] + S-adenosyl-L-homocysteine. It carries out the reaction adenosine(37) in tRNA + 2 reduced [2Fe-2S]-[ferredoxin] + 2 S-adenosyl-L-methionine = 2-methyladenosine(37) in tRNA + 5'-deoxyadenosine + L-methionine + 2 oxidized [2Fe-2S]-[ferredoxin] + S-adenosyl-L-homocysteine. Its function is as follows. Specifically methylates position 2 of adenine 2503 in 23S rRNA and position 2 of adenine 37 in tRNAs. m2A2503 modification seems to play a crucial role in the proofreading step occurring at the peptidyl transferase center and thus would serve to optimize ribosomal fidelity. This is Dual-specificity RNA methyltransferase RlmN from Solidesulfovibrio magneticus (strain ATCC 700980 / DSM 13731 / RS-1) (Desulfovibrio magneticus).